The sequence spans 468 residues: ATP synthase subunit beta (468 aa).

An ATP-binding site is contributed by 155–162 (GGAGVGKT).

The protein belongs to the ATPase alpha/beta chains family. In terms of assembly, F-type ATPases have 2 components, CF(1) - the catalytic core - and CF(0) - the membrane proton channel. CF(1) has five subunits: alpha(3), beta(3), gamma(1), delta(1), epsilon(1). CF(0) has three main subunits: a(1), b(2) and c(9-12). The alpha and beta chains form an alternating ring which encloses part of the gamma chain. CF(1) is attached to CF(0) by a central stalk formed by the gamma and epsilon chains, while a peripheral stalk is formed by the delta and b chains.

It localises to the cell membrane. It catalyses the reaction ATP + H2O + 4 H(+)(in) = ADP + phosphate + 5 H(+)(out). Produces ATP from ADP in the presence of a proton gradient across the membrane. The catalytic sites are hosted primarily by the beta subunits. The polypeptide is ATP synthase subunit beta (Streptococcus pneumoniae serotype 19F (strain G54)).